Reading from the N-terminus, the 564-residue chain is Adenine deaminase (564 aa).

The protein belongs to the metallo-dependent hydrolases superfamily. Adenine deaminase family. The cofactor is Mn(2+).

It catalyses the reaction adenine + H2O + H(+) = hypoxanthine + NH4(+). The protein is Adenine deaminase of Deinococcus geothermalis (strain DSM 11300 / CIP 105573 / AG-3a).